A 216-amino-acid polypeptide reads, in one-letter code: ATP synthase subunit a (216 aa).

7 consecutive transmembrane segments (helical) span residues 1–21, 62–82, 88–108, 119–139, 149–169, 174–194, and 196–216; these read MEYS…IFVL, LIAA…VPGF, NINT…FEGF, FMGP…ISHI, LFAN…LVIK, LVVS…AIFI, and TYIF…HEEH.

This sequence belongs to the ATPase A chain family. In terms of assembly, F-type ATPases have 2 components, CF(1) - the catalytic core - and CF(0) - the membrane proton channel. CF(1) has five subunits: alpha(3), beta(3), gamma(1), delta(1), epsilon(1). CF(0) has three main subunits: a(1), b(2) and c(9-12). The alpha and beta chains form an alternating ring which encloses part of the gamma chain. CF(1) is attached to CF(0) by a central stalk formed by the gamma and epsilon chains, while a peripheral stalk is formed by the delta and b chains.

Its subcellular location is the cell inner membrane. Its function is as follows. Key component of the proton channel; it plays a direct role in the translocation of protons across the membrane. The sequence is that of ATP synthase subunit a from Aquifex aeolicus (strain VF5).